A 343-amino-acid polypeptide reads, in one-letter code: Aspartate carbamoyltransferase catalytic subunit (343 aa).

Over residues 1–14 (MTTDTTGRTGNPAA) the composition is skewed to polar residues. The disordered stretch occupies residues 1–20 (MTTDTTGRTGNPAATASPDR). Carbamoyl phosphate-binding residues include arginine 91 and threonine 92. L-aspartate is bound at residue lysine 119. Residues arginine 141, histidine 171, and glutamine 174 each contribute to the carbamoyl phosphate site. L-aspartate-binding residues include arginine 204 and arginine 259. Carbamoyl phosphate contacts are provided by glycine 300 and proline 301.

Belongs to the aspartate/ornithine carbamoyltransferase superfamily. ATCase family. In terms of assembly, heterododecamer (2C3:3R2) of six catalytic PyrB chains organized as two trimers (C3), and six regulatory PyrI chains organized as three dimers (R2).

It catalyses the reaction carbamoyl phosphate + L-aspartate = N-carbamoyl-L-aspartate + phosphate + H(+). It functions in the pathway pyrimidine metabolism; UMP biosynthesis via de novo pathway; (S)-dihydroorotate from bicarbonate: step 2/3. Its function is as follows. Catalyzes the condensation of carbamoyl phosphate and aspartate to form carbamoyl aspartate and inorganic phosphate, the committed step in the de novo pyrimidine nucleotide biosynthesis pathway. In Burkholderia lata (strain ATCC 17760 / DSM 23089 / LMG 22485 / NCIMB 9086 / R18194 / 383), this protein is Aspartate carbamoyltransferase catalytic subunit.